The primary structure comprises 335 residues: Lipoyl synthase (335 aa).

Over residues methionine 1–serine 13 the composition is skewed to polar residues. Residues methionine 1 to threonine 29 are disordered. [4Fe-4S] cluster contacts are provided by cysteine 75, cysteine 80, cysteine 86, cysteine 101, cysteine 105, cysteine 108, and serine 315. In terms of domain architecture, Radical SAM core spans cysteine 86–alanine 304.

This sequence belongs to the radical SAM superfamily. Lipoyl synthase family. [4Fe-4S] cluster is required as a cofactor.

The protein resides in the cytoplasm. The catalysed reaction is [[Fe-S] cluster scaffold protein carrying a second [4Fe-4S](2+) cluster] + N(6)-octanoyl-L-lysyl-[protein] + 2 oxidized [2Fe-2S]-[ferredoxin] + 2 S-adenosyl-L-methionine + 4 H(+) = [[Fe-S] cluster scaffold protein] + N(6)-[(R)-dihydrolipoyl]-L-lysyl-[protein] + 4 Fe(3+) + 2 hydrogen sulfide + 2 5'-deoxyadenosine + 2 L-methionine + 2 reduced [2Fe-2S]-[ferredoxin]. It participates in protein modification; protein lipoylation via endogenous pathway; protein N(6)-(lipoyl)lysine from octanoyl-[acyl-carrier-protein]: step 2/2. Functionally, catalyzes the radical-mediated insertion of two sulfur atoms into the C-6 and C-8 positions of the octanoyl moiety bound to the lipoyl domains of lipoate-dependent enzymes, thereby converting the octanoylated domains into lipoylated derivatives. This chain is Lipoyl synthase, found in Herminiimonas arsenicoxydans.